A 419-amino-acid chain; its full sequence is Double-stranded RNA-binding protein 1 (419 aa).

2 DRBM domains span residues valine 15–lysine 84 and leucine 101–serine 170. The Bipartite nuclear localization motif lies at lysine 207 to arginine 222. Repeat copies occupy residues glutamate 247–threonine 274, glutamate 275–threonine 302, glutamate 303–threonine 330, glutamate 331–threonine 358, glutamate 359–threonine 386, and glutamate 387–threonine 414. A 6 X 28 AA repeats of E-K-I-E-T-T-P-N-L-E-[PS]-[PS]-S-C-M-[NS]-G-L-K-E-A-A-F-G-S-V-E-T region spans residues glutamate 247–threonine 414.

In terms of assembly, homodimer. Heterodimer with DRB2, DRB4 or DRB5. Interacts with SE and DCL1. Interacts with RCF3, RS40 and RS41. As to expression, expressed in rosette and cauline leaves, stems, roots, flowers and siliques.

It is found in the nucleus. The protein localises to the nucleus speckle. Double-stranded RNA-binding protein involved in RNA-mediated post-transcriptional gene silencing (PTGS). Functions in the microRNAs (miRNAs) biogenesis by assisting DICER-LIKE 1 (DCL1) in the accurate processing from primary miRNAs (pri-miRNAs) to miRNAs in the nucleus. Forms a complex with SERRATE (SE) and DCL1 to promote accurate processing of pri-miRNAs by DCL1. Binds and assist DCL1 for accurate processing of precursor miRNAs (pre-miRNA). Indirectly involved in the production of trans-acting small interfering RNAs (ta-siRNAs) derived from the TAS1, TAS2 or TAS3 endogenous transcripts by participating in the production of their initiating miRNAs. Involved with argonaute 1 (AGO1) in the guide strand selection from miRNA duplexes, presumably by directional loading of the miRNA duplex (guide stand and passenger strand) onto the RNA-induced silencing complex (RISC) for passenger strand degradation. Does not participate in sense transgene-induced post-transcriptional gene silencing (S-PTGS). Involved in several plant development aspects and response to hormones through its role in miRNAs processing. In Arabidopsis thaliana (Mouse-ear cress), this protein is Double-stranded RNA-binding protein 1 (DRB1).